A 414-amino-acid chain; its full sequence is 2,3-diketo-5-methylthiopentyl-1-phosphate enolase (414 aa).

K99 acts as the Proton acceptor in catalysis. Residues K148, 174-177, H265, G338, and 360-361 contribute to the substrate site; these read KDDE and GG. 3 residues coordinate Mg(2+): K174, D176, and E177. An N6-carboxylysine modification is found at K174.

It belongs to the RuBisCO large chain family. Type IV subfamily. In terms of assembly, homodimer. Requires Mg(2+) as cofactor.

It catalyses the reaction 5-methylsulfanyl-2,3-dioxopentyl phosphate = 2-hydroxy-5-methylsulfanyl-3-oxopent-1-enyl phosphate. The protein operates within amino-acid biosynthesis; L-methionine biosynthesis via salvage pathway; L-methionine from S-methyl-5-thio-alpha-D-ribose 1-phosphate: step 3/6. Catalyzes the enolization of 2,3-diketo-5-methylthiopentyl-1-phosphate (DK-MTP-1-P) into 2-hydroxy-3-keto-5-methylthiopentenyl-1-phosphate (HK-MTPenyl-1-P). The chain is 2,3-diketo-5-methylthiopentyl-1-phosphate enolase from Bacillus cereus (strain G9842).